The following is a 338-amino-acid chain: Ketol-acid reductoisomerase (NADP(+)) (338 aa).

A KARI N-terminal Rossmann domain is found at 1–181 (MKVYYDKDAD…GGGKAGIIET (181 aa)). NADP(+)-binding positions include 24–27 (YGSQ), arginine 47, and serine 52. Histidine 107 is a catalytic residue. Residue glycine 133 participates in NADP(+) binding. The KARI C-terminal knotted domain maps to 182–327 (NFREETETDL…EKLRAMMPWI (146 aa)). Mg(2+)-binding residues include aspartate 190, glutamate 194, glutamate 226, and glutamate 230. Serine 251 contributes to the substrate binding site.

The protein belongs to the ketol-acid reductoisomerase family. Requires Mg(2+) as cofactor.

The catalysed reaction is (2R)-2,3-dihydroxy-3-methylbutanoate + NADP(+) = (2S)-2-acetolactate + NADPH + H(+). The enzyme catalyses (2R,3R)-2,3-dihydroxy-3-methylpentanoate + NADP(+) = (S)-2-ethyl-2-hydroxy-3-oxobutanoate + NADPH + H(+). Its pathway is amino-acid biosynthesis; L-isoleucine biosynthesis; L-isoleucine from 2-oxobutanoate: step 2/4. It participates in amino-acid biosynthesis; L-valine biosynthesis; L-valine from pyruvate: step 2/4. Functionally, involved in the biosynthesis of branched-chain amino acids (BCAA). Catalyzes an alkyl-migration followed by a ketol-acid reduction of (S)-2-acetolactate (S2AL) to yield (R)-2,3-dihydroxy-isovalerate. In the isomerase reaction, S2AL is rearranged via a Mg-dependent methyl migration to produce 3-hydroxy-3-methyl-2-ketobutyrate (HMKB). In the reductase reaction, this 2-ketoacid undergoes a metal-dependent reduction by NADPH to yield (R)-2,3-dihydroxy-isovalerate. The sequence is that of Ketol-acid reductoisomerase (NADP(+)) from Methylibium petroleiphilum (strain ATCC BAA-1232 / LMG 22953 / PM1).